The chain runs to 208 residues: Flavin-dependent thymidylate synthase (208 aa).

A ThyX domain is found at 1 to 208 (MEVICKHYTP…QYLFEDCLKH (208 aa)). FAD is bound by residues S50 and 74–76 (RHR). DUMP-binding positions include 71–74 (ELSR), 84–86 (SSR), and K147. A ThyX motif motif is present at residues 74-84 (RHRIASLSVKS). FAD contacts are provided by residues 163–165 (NAR) and N169. R174 lines the dUMP pocket. R174 acts as the Involved in ionization of N3 of dUMP, leading to its activation in catalysis.

This sequence belongs to the thymidylate synthase ThyX family. Homotetramer. The cofactor is FAD.

It carries out the reaction dUMP + (6R)-5,10-methylene-5,6,7,8-tetrahydrofolate + NADPH + H(+) = dTMP + (6S)-5,6,7,8-tetrahydrofolate + NADP(+). It participates in pyrimidine metabolism; dTTP biosynthesis. Functionally, catalyzes the reductive methylation of 2'-deoxyuridine-5'-monophosphate (dUMP) to 2'-deoxythymidine-5'-monophosphate (dTMP) while utilizing 5,10-methylenetetrahydrofolate (mTHF) as the methyl donor, and NADPH and FADH(2) as the reductant. The polypeptide is Flavin-dependent thymidylate synthase (Helicobacter pylori (strain J99 / ATCC 700824) (Campylobacter pylori J99)).